We begin with the raw amino-acid sequence, 204 residues long: Leucyl/phenylalanyl-tRNA--protein transferase (204 aa).

This sequence belongs to the L/F-transferase family.

Its subcellular location is the cytoplasm. The enzyme catalyses N-terminal L-lysyl-[protein] + L-leucyl-tRNA(Leu) = N-terminal L-leucyl-L-lysyl-[protein] + tRNA(Leu) + H(+). It carries out the reaction N-terminal L-arginyl-[protein] + L-leucyl-tRNA(Leu) = N-terminal L-leucyl-L-arginyl-[protein] + tRNA(Leu) + H(+). It catalyses the reaction L-phenylalanyl-tRNA(Phe) + an N-terminal L-alpha-aminoacyl-[protein] = an N-terminal L-phenylalanyl-L-alpha-aminoacyl-[protein] + tRNA(Phe). In terms of biological role, functions in the N-end rule pathway of protein degradation where it conjugates Leu, Phe and, less efficiently, Met from aminoacyl-tRNAs to the N-termini of proteins containing an N-terminal arginine or lysine. This is Leucyl/phenylalanyl-tRNA--protein transferase from Rhizobium leguminosarum bv. trifolii (strain WSM2304).